The sequence spans 490 residues: Aspartyl/glutamyl-tRNA(Asn/Gln) amidotransferase subunit B (490 aa).

The protein belongs to the GatB/GatE family. GatB subfamily. In terms of assembly, heterotrimer of A, B and C subunits.

It carries out the reaction L-glutamyl-tRNA(Gln) + L-glutamine + ATP + H2O = L-glutaminyl-tRNA(Gln) + L-glutamate + ADP + phosphate + H(+). It catalyses the reaction L-aspartyl-tRNA(Asn) + L-glutamine + ATP + H2O = L-asparaginyl-tRNA(Asn) + L-glutamate + ADP + phosphate + 2 H(+). Functionally, allows the formation of correctly charged Asn-tRNA(Asn) or Gln-tRNA(Gln) through the transamidation of misacylated Asp-tRNA(Asn) or Glu-tRNA(Gln) in organisms which lack either or both of asparaginyl-tRNA or glutaminyl-tRNA synthetases. The reaction takes place in the presence of glutamine and ATP through an activated phospho-Asp-tRNA(Asn) or phospho-Glu-tRNA(Gln). In Burkholderia mallei (strain NCTC 10247), this protein is Aspartyl/glutamyl-tRNA(Asn/Gln) amidotransferase subunit B.